Consider the following 93-residue polypeptide: DNA-binding protein Fis (93 aa).

The segment at residues 74–93 (QTRAALMMGINRGTLRKKLK) is a DNA-binding region (H-T-H motif).

This sequence belongs to the transcriptional regulatory Fis family. In terms of assembly, homodimer.

Activates ribosomal RNA transcription. Plays a direct role in upstream activation of rRNA promoters. This is DNA-binding protein Fis from Klebsiella pneumoniae.